Consider the following 76-residue polypeptide: Conotoxin VnMEKL-012 (76 aa).

The first 18 residues, 1–18 (MKLTILFLVAAVLMSTQA), serve as a signal peptide directing secretion. The propeptide occupies 19–42 (LIQHDGEKSQKAKMKFLTARTLSA). 3 disulfide bridges follow: cysteine 49-cysteine 65, cysteine 56-cysteine 70, and cysteine 64-cysteine 74.

Belongs to the conotoxin O2 superfamily. In terms of tissue distribution, expressed by the venom duct.

It is found in the secreted. The polypeptide is Conotoxin VnMEKL-012 (Conus ventricosus (Mediterranean cone)).